We begin with the raw amino-acid sequence, 464 residues long: tRNA modification GTPase MnmE (464 aa).

(6S)-5-formyl-5,6,7,8-tetrahydrofolate is bound by residues Arg25, Glu87, and Lys130. Residues 226 to 386 (GLSVVLAGQP…LRAELLRIAG (161 aa)) form the TrmE-type G domain. Asn236 is a K(+) binding site. GTP contacts are provided by residues 236 to 241 (NVGKSS), 255 to 261 (TPIAGTT), and 280 to 283 (DTAG). Residue Ser240 participates in Mg(2+) binding. Positions 255, 257, and 260 each coordinate K(+). Residue Thr261 participates in Mg(2+) binding. Lys464 contributes to the (6S)-5-formyl-5,6,7,8-tetrahydrofolate binding site.

It belongs to the TRAFAC class TrmE-Era-EngA-EngB-Septin-like GTPase superfamily. TrmE GTPase family. As to quaternary structure, homodimer. Heterotetramer of two MnmE and two MnmG subunits. The cofactor is K(+).

It is found in the cytoplasm. Exhibits a very high intrinsic GTPase hydrolysis rate. Involved in the addition of a carboxymethylaminomethyl (cmnm) group at the wobble position (U34) of certain tRNAs, forming tRNA-cmnm(5)s(2)U34. The sequence is that of tRNA modification GTPase MnmE from Burkholderia lata (strain ATCC 17760 / DSM 23089 / LMG 22485 / NCIMB 9086 / R18194 / 383).